Reading from the N-terminus, the 360-residue chain is Phospho-N-acetylmuramoyl-pentapeptide-transferase (360 aa).

10 helical membrane passes run 27 to 47 (GATA…IAAL), 74 to 94 (TMGG…WANL), 99 to 119 (VWVV…DDYL), 135 to 155 (LLLE…LGTP), 165 to 185 (INGF…FVIV), 199 to 219 (GLAI…AYLA), 236 to 256 (AGEL…FLWF), 263 to 283 (IFMG…VAVA), 288 to 308 (IVLA…IVQV), and 337 to 357 (QVVV…LSTL).

This sequence belongs to the glycosyltransferase 4 family. MraY subfamily. It depends on Mg(2+) as a cofactor.

It is found in the cell inner membrane. The catalysed reaction is UDP-N-acetyl-alpha-D-muramoyl-L-alanyl-gamma-D-glutamyl-meso-2,6-diaminopimeloyl-D-alanyl-D-alanine + di-trans,octa-cis-undecaprenyl phosphate = di-trans,octa-cis-undecaprenyl diphospho-N-acetyl-alpha-D-muramoyl-L-alanyl-D-glutamyl-meso-2,6-diaminopimeloyl-D-alanyl-D-alanine + UMP. It participates in cell wall biogenesis; peptidoglycan biosynthesis. Its function is as follows. Catalyzes the initial step of the lipid cycle reactions in the biosynthesis of the cell wall peptidoglycan: transfers peptidoglycan precursor phospho-MurNAc-pentapeptide from UDP-MurNAc-pentapeptide onto the lipid carrier undecaprenyl phosphate, yielding undecaprenyl-pyrophosphoryl-MurNAc-pentapeptide, known as lipid I. In Methylocella silvestris (strain DSM 15510 / CIP 108128 / LMG 27833 / NCIMB 13906 / BL2), this protein is Phospho-N-acetylmuramoyl-pentapeptide-transferase.